Reading from the N-terminus, the 357-residue chain is Peptide chain release factor 1 (357 aa).

Gln235 is modified (N5-methylglutamine).

It belongs to the prokaryotic/mitochondrial release factor family. In terms of processing, methylated by PrmC. Methylation increases the termination efficiency of RF1.

It localises to the cytoplasm. Peptide chain release factor 1 directs the termination of translation in response to the peptide chain termination codons UAG and UAA. The protein is Peptide chain release factor 1 of Alkaliphilus metalliredigens (strain QYMF).